Here is a 230-residue protein sequence, read N- to C-terminus: Ribosomal RNA small subunit methyltransferase G (230 aa).

Residues Gly-80, Phe-85, Val-131–Glu-132, and Arg-145 each bind S-adenosyl-L-methionine.

Belongs to the methyltransferase superfamily. RNA methyltransferase RsmG family.

It localises to the cytoplasm. It catalyses the reaction guanosine(527) in 16S rRNA + S-adenosyl-L-methionine = N(7)-methylguanosine(527) in 16S rRNA + S-adenosyl-L-homocysteine. In terms of biological role, specifically methylates the N7 position of guanine in position 527 of 16S rRNA. The protein is Ribosomal RNA small subunit methyltransferase G of Novosphingobium aromaticivorans (strain ATCC 700278 / DSM 12444 / CCUG 56034 / CIP 105152 / NBRC 16084 / F199).